Consider the following 400-residue polypeptide: Tryptophan synthase beta chain (400 aa).

An N6-(pyridoxal phosphate)lysine modification is found at Lys92.

It belongs to the TrpB family. As to quaternary structure, tetramer of two alpha and two beta chains. Pyridoxal 5'-phosphate serves as cofactor.

The catalysed reaction is (1S,2R)-1-C-(indol-3-yl)glycerol 3-phosphate + L-serine = D-glyceraldehyde 3-phosphate + L-tryptophan + H2O. It participates in amino-acid biosynthesis; L-tryptophan biosynthesis; L-tryptophan from chorismate: step 5/5. In terms of biological role, the beta subunit is responsible for the synthesis of L-tryptophan from indole and L-serine. The chain is Tryptophan synthase beta chain from Neisseria meningitidis serogroup B (strain ATCC BAA-335 / MC58).